A 187-amino-acid polypeptide reads, in one-letter code: Cytochrome b-245 chaperone 1 (187 aa).

The chain crosses the membrane as a helical span at residues glycine 20 to glycine 42. A Phosphoserine modification is found at serine 168.

Belongs to the CYBC1 family. As to quaternary structure, interacts with CYBB; CYBC1 may act as a chaperone stabilizing Cytochrome b-245 heterodimer.

It is found in the endoplasmic reticulum membrane. Functionally, functions as a chaperone necessary for a stable expression of the CYBA and CYBB subunits of the cytochrome b-245 heterodimer. Controls the phagocyte respiratory burst and is essential for innate immunity. The chain is Cytochrome b-245 chaperone 1 from Bos taurus (Bovine).